The primary structure comprises 757 residues: Glutathione biosynthesis bifunctional protein GshAB (757 aa).

The segment at 1 to 337 is glutamate--cysteine ligase; it reads MKIQHIIHEN…LGKARLAEVA (337 aa). The ATP-grasp domain maps to 494–753; the sequence is KKVLQKAGFN…LTQNVIKMLF (260 aa). 521–580 provides a ligand contact to ATP; the sequence is ALFENRAVVIKPKSTNYGLGITIFQQGVQNREDFAKALEIAFREDKEVMVEDYLVGTEYR. Residues Asp-702, Glu-723, and Asn-725 each coordinate Mg(2+). Residues Asp-702, Glu-723, and Asn-725 each coordinate Mn(2+).

The protein in the N-terminal section; belongs to the glutamate--cysteine ligase type 1 family. Type 2 subfamily. Monomer. It depends on Mg(2+) as a cofactor. Mn(2+) serves as cofactor.

It carries out the reaction L-cysteine + L-glutamate + ATP = gamma-L-glutamyl-L-cysteine + ADP + phosphate + H(+). The enzyme catalyses gamma-L-glutamyl-L-cysteine + glycine + ATP = glutathione + ADP + phosphate + H(+). It functions in the pathway sulfur metabolism; glutathione biosynthesis; glutathione from L-cysteine and L-glutamate: step 1/2. The protein operates within sulfur metabolism; glutathione biosynthesis; glutathione from L-cysteine and L-glutamate: step 2/2. Functionally, synthesizes glutathione from L-glutamate and L-cysteine via gamma-L-glutamyl-L-cysteine. This Pasteurella multocida (strain Pm70) protein is Glutathione biosynthesis bifunctional protein GshAB.